A 139-amino-acid polypeptide reads, in one-letter code: Protein Turandot B (139 aa).

An N-terminal signal peptide occupies residues 1-21; it reads MNFKTALICFALLLIGTLCSA.

The protein belongs to the Turandot family.

The protein localises to the secreted. A humoral factor that may play a role in stress tolerance. This Drosophila sechellia (Fruit fly) protein is Protein Turandot B.